The following is a 941-amino-acid chain: Protocadherin alpha-12 (941 aa).

Positions 1–29 (MVIIGPRGPGSQRLLLSLLLLAAWEVGSG) are cleaved as a signal peptide. Cadherin domains follow at residues 30 to 133 (QLHY…PPVF), 134 to 242 (RERE…GPAF), 243 to 350 (DKPS…VPEV), 351 to 455 (MVTS…APAF), 456 to 565 (AQPE…APAL), and 581 to 678 (VPRS…APKT). Over 30–697 (QLHYSVYEEA…DPEAALVDIN (668 aa)) the chain is Extracellular. N-linked (GlcNAc...) asparagine glycans are attached at residues asparagine 257 and asparagine 265. The N-linked (GlcNAc...) asparagine glycan is linked to asparagine 548. A helical membrane pass occupies residues 698–718 (VYLIIAICAVSSLLVLTLLLY). Residues 719-941 (TALRCSAPPT…GNSTTDNSDQ (223 aa)) lie on the Cytoplasmic side of the membrane. PXXP repeat units lie at residues 734 to 737 (PGKP), 790 to 793 (PRQP), 823 to 826 (PGGP), 863 to 866 (GPGN), and 882 to 885 (PGSP). The tract at residues 734 to 885 (PGKPTLVCSS…PDKFIIPGSP (152 aa)) is 5 X 4 AA repeats of P-X-X-P. The tract at residues 818 to 941 (ILRAGPGGPD…GNSTTDNSDQ (124 aa)) is disordered. Over residues 900–914 (DKSDFITFGKKEETK) the composition is skewed to basic and acidic residues.

It is found in the cell membrane. In terms of biological role, potential calcium-dependent cell-adhesion protein. May be involved in the establishment and maintenance of specific neuronal connections in the brain. This chain is Protocadherin alpha-12 (PCDHA12), found in Pan troglodytes (Chimpanzee).